Here is a 396-residue protein sequence, read N- to C-terminus: Putative nickel insertion protein (396 aa).

The disordered stretch occupies residues 333–355 (RSKLARESQTVETPDGPAKGKTV).

The protein belongs to the LarC family.

The protein is Putative nickel insertion protein of Rhodopirellula baltica (strain DSM 10527 / NCIMB 13988 / SH1).